A 272-amino-acid polypeptide reads, in one-letter code: Ribosome maturation factor RimP (272 aa).

The disordered stretch occupies residues 209-272; it reads QNLGILPPPP…RGDIDPPEGD (64 aa). The segment covering 250 to 266 has biased composition (basic and acidic residues); sequence NTKEHRLAAERLRRGDI.

The protein belongs to the RimP family.

It is found in the cytoplasm. Its function is as follows. Required for maturation of 30S ribosomal subunits. The chain is Ribosome maturation factor RimP from Rhodopseudomonas palustris (strain BisA53).